The following is a 407-amino-acid chain: Peptidase T (407 aa).

A Zn(2+)-binding site is contributed by His-81. Residue Asp-83 is part of the active site. Asp-142 serves as a coordination point for Zn(2+). The active-site Proton acceptor is the Glu-176. Residues Glu-177, Asp-199, and His-381 each contribute to the Zn(2+) site.

This sequence belongs to the peptidase M20B family. Zn(2+) serves as cofactor.

The protein resides in the cytoplasm. It catalyses the reaction Release of the N-terminal residue from a tripeptide.. Its function is as follows. Cleaves the N-terminal amino acid of tripeptides. The sequence is that of Peptidase T from Streptococcus pneumoniae (strain ATCC 700669 / Spain 23F-1).